The chain runs to 832 residues: Prickle-like protein 1 (832 aa).

The PET domain occupies phenylalanine 14–methionine 122. 3 consecutive LIM zinc-binding domains span residues alanine 124–lysine 188, proline 189–glutamate 249, and tyrosine 250–histidine 313. Residues alanine 314–serine 342 form a disordered region. Phosphoserine is present on residues serine 315, serine 592, and serine 595. Disordered stretches follow at residues histidine 663–leucine 688 and serine 765–serine 832. Over residues arginine 670–lysine 681 the composition is skewed to basic residues. Serine 684 carries the phosphoserine modification. Polar residues predominate over residues aspartate 798–threonine 815. The span at threonine 816–serine 832 shows a compositional bias: basic residues. A Cysteine methyl ester modification is found at cysteine 829. Cysteine 829 carries S-farnesyl cysteine lipidation. Positions isoleucine 830 to serine 832 are cleaved as a propeptide — removed in mature form.

This sequence belongs to the prickle / espinas / testin family. As to quaternary structure, interacts with REST.

It localises to the nucleus membrane. It is found in the cytoplasm. The protein localises to the cytosol. Functionally, involved in the planar cell polarity pathway that controls convergent extension during gastrulation and neural tube closure. Convergent extension is a complex morphogenetic process during which cells elongate, move mediolaterally, and intercalate between neighboring cells, leading to convergence toward the mediolateral axis and extension along the anteroposterior axis. Necessary for nuclear localization of REST. May serve as nuclear receptor. This chain is Prickle-like protein 1 (Prickle1), found in Mus musculus (Mouse).